The sequence spans 229 residues: MDTITLTDHHFLHILQLASSALPVGAYSYSEGLETLVESGTITSQSTLQQWLEAELSYGAIRLEAAVMVRSYQATIMGEMETLRYWNLWLSAARETQELRNSSWQMGRSLMQLLGKIQPEILSLANSVGNPCNYAIAFAIASAHWQVNIQAALLAYLHSWATNLITAGVKLIPLGQTAGQELLLQLQPLISHATVEIMSLKDDELSCCSWGLSLASMQHETQYTRLFRS.

Belongs to the UreF family. UreD, UreF and UreG form a complex that acts as a GTP-hydrolysis-dependent molecular chaperone, activating the urease apoprotein by helping to assemble the nickel containing metallocenter of UreC. The UreE protein probably delivers the nickel.

It localises to the cytoplasm. Functionally, required for maturation of urease via the functional incorporation of the urease nickel metallocenter. In Trichormus variabilis (strain ATCC 29413 / PCC 7937) (Anabaena variabilis), this protein is Urease accessory protein UreF.